We begin with the raw amino-acid sequence, 257 residues long: Aspartate/glutamate leucyltransferase (257 aa).

Belongs to the R-transferase family. Bpt subfamily.

Its subcellular location is the cytoplasm. It carries out the reaction N-terminal L-glutamyl-[protein] + L-leucyl-tRNA(Leu) = N-terminal L-leucyl-L-glutamyl-[protein] + tRNA(Leu) + H(+). The enzyme catalyses N-terminal L-aspartyl-[protein] + L-leucyl-tRNA(Leu) = N-terminal L-leucyl-L-aspartyl-[protein] + tRNA(Leu) + H(+). Functions in the N-end rule pathway of protein degradation where it conjugates Leu from its aminoacyl-tRNA to the N-termini of proteins containing an N-terminal aspartate or glutamate. This is Aspartate/glutamate leucyltransferase from Sphingopyxis alaskensis (strain DSM 13593 / LMG 18877 / RB2256) (Sphingomonas alaskensis).